A 297-amino-acid polypeptide reads, in one-letter code: Heme A synthase (297 aa).

Over 1–6 (MNRKLS) the chain is Cytoplasmic. The chain crosses the membrane as a helical span at residues 7–27 (IFSAFVTFTMMIVLLMGGTVT). The Extracellular portion of the chain corresponds to 28 to 62 (KTDSGNGCGTDWPLCHGELIPTNPSVETMIEYSHR). A disulfide bridge connects residues C35 and C42. E58 is an active-site residue. H61 is a binding site for heme o. Residues 63 to 83 (AVTGVVGLLIIALCLWTLVAF) traverse the membrane as a helical segment. Topologically, residues 84–90 (KDRLDIK) are cytoplasmic. Residues 91-111 (IFAFLAFIFMLIQSIVGAGAV) form a helical membrane-spanning segment. Over 112 to 121 (VWQQSDLVMA) the chain is Extracellular. The helical transmembrane segment at 122 to 142 (LHFGISLISFASLLILTILIM) threads the bilayer. H123 provides a ligand contact to heme o. Residues 143–160 (ERSGQEFRESVPAFLRKL) are Cytoplasmic-facing. The helical transmembrane segment at 161–181 (LYGLLIYTLIVVYTGAFVRHV) threads the bilayer. Residues 182 to 201 (GATYACVGWPVCSQPTMTFE) are Extracellular-facing. C187 and C193 are disulfide-bonded. A helical transmembrane segment spans residues 202-222 (AWVQMIHRILAGLLFFYTLFV). A heme b-binding site is contributed by H208. The Cytoplasmic segment spans residues 223-236 (HYTAIRLKHRTSRT). A helical transmembrane segment spans residues 237-257 (GMLFATFFISCQVATGAWIVL). Residues 258-262 (GGHAT) are Extracellular-facing. A helical membrane pass occupies residues 263–283 (YVPLLHAFLITCYFGVISYLA). H268 contacts heme b. The Cytoplasmic portion of the chain corresponds to 284 to 297 (YHAFRTRKKDSRLR).

The protein belongs to the COX15/CtaA family. Type 1 subfamily. In terms of assembly, interacts with CtaB. Requires heme b as cofactor.

The protein resides in the cell membrane. It carries out the reaction Fe(II)-heme o + 2 A + H2O = Fe(II)-heme a + 2 AH2. It functions in the pathway porphyrin-containing compound metabolism; heme A biosynthesis; heme A from heme O: step 1/1. In terms of biological role, catalyzes the conversion of heme O to heme A by two successive hydroxylations of the methyl group at C8. The first hydroxylation forms heme I, the second hydroxylation results in an unstable dihydroxymethyl group, which spontaneously dehydrates, resulting in the formyl group of heme A. The sequence is that of Heme A synthase from Exiguobacterium sibiricum (strain DSM 17290 / CCUG 55495 / CIP 109462 / JCM 13490 / 255-15).